Here is a 343-residue protein sequence, read N- to C-terminus: Leucine-rich repeat-containing protein 39 (343 aa).

LRR repeat units follow at residues 64–87, 88–110, 111–133, 134–156, 158–180, 181–203, 204–226, 228–249, 250–274, and 275–295; these read EEGR…LVQL, SQIQ…ISSF, QSLI…IGKL, TRLR…LGCC, NLEK…LSNL, KKLS…VVNL, PSLE…IHRM, KLHT…ISRM, KSLD…GMSN, and LRFV…PDLN.

It is found in the cytoplasm. The protein resides in the myofibril. The protein localises to the sarcomere. It localises to the m line. Functionally, component of the sarcomeric M-band which plays a role in myocyte response to biomechanical stress. May regulate expression of other M-band proteins via an SRF-dependent pathway. Important for normal contractile function in heart. This is Leucine-rich repeat-containing protein 39 from Danio rerio (Zebrafish).